The sequence spans 510 residues: MSHIPISNTIPTKQTDGNGKANISPDKLDPKVSIDMEAPEFKDFAKTMVDFIAEYLENIRERRVLPEVKPGYLKPLIPDAAPEKPEKWQDVMQDIERVIMPGVTHWHSPKFHAYFPTANSYPAIVADMLSGAIACIGFTWIASPACTELEVVMMDWLGKMLELPAEFLACSGGKGGGVIQGTASESTLVALLGAKAKKLKEVKELHPEWDEHTILGKLVGYCSDQAHSSVERAGLLGGVKLRSVQSENHRMRGAALEKAIEQDVAEGLIPFYAVVTLGTTNSCAFDYLDECGPVGNKHNLWIHVDAAYAGSAFICPEYRHLMKGIESADSFNFNPHKWMLVNFDCSAMWLKDPSWVVNAFNVDPLYLKHDMQGSAPDYRHWQIPLGRRFRALKLWFVLRLYGVENLQAHIRRHCNFAKQFGDLCVADSRFELAAEINMGLVCFRLKGSNERNEALLKRINGRGHIHLVPAKIKDVYFLRMAICSRFTQSEDMEYSWKEVSAAADEMEQEQ.

Residues 1–17 (MSHIPISNTIPTKQTDG) are compositionally biased toward polar residues. Residues 1–28 (MSHIPISNTIPTKQTDGNGKANISPDKL) are disordered. Thr117 contributes to the substrate binding site. Pyridoxal 5'-phosphate is bound by residues Ala183, Ser184, His227, Asp305, and Asn334. Position 227 (His227) interacts with substrate. His227 is an active-site residue. The residue at position 337 (Lys337) is an N6-(pyridoxal phosphate)lysine. The interval 358–384 (NAFNVDPLYLKHDMQGSAPDYRHWQIP) is disordered.

Belongs to the group II decarboxylase family. As to quaternary structure, homodimer. Pyridoxal 5'-phosphate is required as a cofactor. Hypoderm isoform is expressed only in hypodermal epithelium and the CNS isoform only in central nervous system. Expressed in the adult head (at protein level).

It catalyses the reaction L-dopa + H(+) = dopamine + CO2. It carries out the reaction 5-hydroxy-L-tryptophan + H(+) = serotonin + CO2. Functionally, catalyzes the decarboxylation of L-3,4-dihydroxyphenylalanine (L-DOPA) to dopamine and L-5-hydroxytryptophan (5-HTP) to serotonin. Catalyzes the formation of serotonin more efficiently than dopamine. Displays no activity to tyrosine. Variation in the synthesis of bioamines may be a factor contributing to natural variation in life span. In Drosophila melanogaster (Fruit fly), this protein is Aromatic-L-amino-acid decarboxylase (Ddc).